A 425-amino-acid chain; its full sequence is Enolase (425 aa).

Gln163 contacts (2R)-2-phosphoglycerate. The active-site Proton donor is Glu205. Positions 242, 285, and 312 each coordinate Mg(2+). (2R)-2-phosphoglycerate is bound by residues Lys337, Arg366, Ser367, and Lys388. Catalysis depends on Lys337, which acts as the Proton acceptor.

Belongs to the enolase family. Mg(2+) serves as cofactor.

It localises to the cytoplasm. The protein resides in the secreted. It is found in the cell surface. The catalysed reaction is (2R)-2-phosphoglycerate = phosphoenolpyruvate + H2O. Its pathway is carbohydrate degradation; glycolysis; pyruvate from D-glyceraldehyde 3-phosphate: step 4/5. Its function is as follows. Catalyzes the reversible conversion of 2-phosphoglycerate (2-PG) into phosphoenolpyruvate (PEP). It is essential for the degradation of carbohydrates via glycolysis. This is Enolase from Rhodospirillum rubrum (strain ATCC 11170 / ATH 1.1.1 / DSM 467 / LMG 4362 / NCIMB 8255 / S1).